Reading from the N-terminus, the 656-residue chain is Hemocyanin subunit A (656 aa).

The first 18 residues, 1-18 (MWSLALATLFVLGTVIRA), serve as a signal peptide directing secretion. Cu cation contacts are provided by His-197, His-201, and His-227. An N-linked (GlcNAc...) asparagine glycan is attached at Asn-313. Cu cation contacts are provided by His-348, His-352, and His-388. A disulfide bond links Cys-558 and Cys-606.

Belongs to the tyrosinase family. Hemocyanin subfamily. As to quaternary structure, 36-chain polymer consisting of 6 hexamers, each of which includes 4 different chains, A, B, C and D. In terms of tissue distribution, hemolymph.

Its subcellular location is the secreted. The protein localises to the extracellular space. Functionally, hemocyanins are copper-containing oxygen carriers occurring freely dissolved in the hemolymph of many mollusks and arthropods. The chain is Hemocyanin subunit A (HCA) from Scutigera coleoptrata (House centipede).